Consider the following 684-residue polypeptide: MADKKNLLLLFDHPTEPVFMDKGKRVTVFDVPDSFLTDRYRPISNEVQSRVGDKVEQRVPVREISIPDLRIPMSLGRDEQFSLFLPKHRRIAGRLIDIFMNMRSVDDLQSVAVYARDRVNPVLFNYALSVALLHRPDTQGLDLPSFSQTFPDRFIDSQVIRKMREESFVVQPGSRMPITIPRDYTASDLDPEHRLWYFREDLGINLHHWHWHLVYPFEASDRSIVAKDRRGELFYYMHQQVIARYNAERFSNNLARVLPFNNLRDPIAEGYFPKMDSLVASRAWPPRFESTRLSDLNRESDQLNVEIGDLERWRDRIYEAIHQGFVMDERGNRVPLDEATGIDTLGNMIESSILSPNRVLYGDLHNNGHTFISYAHDPTSKHLESFGVMGDVSTAMRDPVFYKWHSYIDRIFQEHKSRLPAYTENQLNYPGVSIAGIQVDTNGGRPNNLTTFWQQSDVDMSRGFDFLPRGNVFARFTHLQHLPFTYTISLNNDSGAQRFGYVRIFMAPKNDERGQPMLMRDQRSMMIELDKFVTSLNPGPNTIRRRSTESSVTIPFERTFRNLDANRPAAGTPEELEFNFCGCGWPNHMLVPKGLPEGLQCVLFIMVSNYENDRIDQQLVGRCSDAASYCGVRDRLYPDRQSMGFPFDRLPRSGVDRLVNFLTPNMSIVDVNIRHENRTVQRPN.

A propeptide spanning residues 1 to 50 is cleaved from the precursor; it reads MADKKNLLLLFDHPTEPVFMDKGKRVTVFDVPDSFLTDRYRPISNEVQSR. Cu cation is bound by residues His-208, His-212, and His-238. Glu-350 (proton acceptor) is an active-site residue. Residues His-365, His-369, and His-405 each coordinate Cu cation. N-linked (GlcNAc...) asparagine glycosylation is found at Asn-448 and Asn-492. 2 cysteine pairs are disulfide-bonded: Cys-581/Cys-623 and Cys-583/Cys-630. Residues Asn-665 and Asn-677 are each glycosylated (N-linked (GlcNAc...) asparagine).

Belongs to the tyrosinase family. Requires Cu(2+) as cofactor. Upon activation, a trypsin type protease cleaves prophenol oxidase to yield the active enzyme.

The protein localises to the secreted. The enzyme catalyses 2 L-dopa + O2 = 2 L-dopaquinone + 2 H2O. The catalysed reaction is L-tyrosine + O2 = L-dopaquinone + H2O. In terms of biological role, this is a copper-containing oxidase that functions in the formation of pigments such as melanins and other polyphenolic compounds. Catalyzes the rate-limiting conversions of tyrosine to DOPA, DOPA to DOPA-quinone and possibly 5,6 dihydroxyindole to indole-5'6 quinonee. In Drosophila melanogaster (Fruit fly), this protein is Phenoloxidase 2 (PPO2).